Consider the following 1070-residue polypeptide: Ubiquitin-protein ligase E3B (1070 aa).

Residue Met-1 is modified to N-acetylmethionine. Residues 29–58 (RERSAVTIQALVRSFLCRRRLHRDIRKEID) form the IQ domain. A Phosphoserine modification is found at Ser-421. Residues 704 to 1070 (SQHAMKGVIR…ISMNTGFELS (367 aa)) enclose the HECT domain. Catalysis depends on Cys-1038, which acts as the Glycyl thioester intermediate.

As to expression, widely expressed. High expression is observed in developing central nervous system.

It is found in the postsynaptic density. The enzyme catalyses S-ubiquitinyl-[E2 ubiquitin-conjugating enzyme]-L-cysteine + [acceptor protein]-L-lysine = [E2 ubiquitin-conjugating enzyme]-L-cysteine + N(6)-ubiquitinyl-[acceptor protein]-L-lysine.. The protein operates within protein modification; protein ubiquitination. E3 ubiquitin-protein ligase which accepts ubiquitin from an E2 ubiquitin-conjugating enzyme in the form of a thioester and then directly transfers the ubiquitin to targeted substrates. Ubiquitinates BCKDK and targets it for degradation, thereby regulating various metabolic processes. Involved in the positive regulation of neurite branching in hippocampal neurons and the control of neuronal spine number and morphology, through the ubiquitination of PPP3CC. The polypeptide is Ubiquitin-protein ligase E3B (Ube3b) (Mus musculus (Mouse)).